Consider the following 345-residue polypeptide: Ribosomal RNA small subunit methyltransferase C (345 aa).

The protein belongs to the methyltransferase superfamily. RsmC family. Monomer.

The protein resides in the cytoplasm. The enzyme catalyses guanosine(1207) in 16S rRNA + S-adenosyl-L-methionine = N(2)-methylguanosine(1207) in 16S rRNA + S-adenosyl-L-homocysteine + H(+). Its function is as follows. Specifically methylates the guanine in position 1207 of 16S rRNA in the 30S particle. The sequence is that of Ribosomal RNA small subunit methyltransferase C from Shewanella denitrificans (strain OS217 / ATCC BAA-1090 / DSM 15013).